Reading from the N-terminus, the 259-residue chain is Ubiquinone/menaquinone biosynthesis C-methyltransferase UbiE (259 aa).

S-adenosyl-L-methionine-binding positions include Thr-82, Asp-103, 131–132, and Ser-148; that span reads NA.

The protein belongs to the class I-like SAM-binding methyltransferase superfamily. MenG/UbiE family.

The catalysed reaction is a 2-demethylmenaquinol + S-adenosyl-L-methionine = a menaquinol + S-adenosyl-L-homocysteine + H(+). It carries out the reaction a 2-methoxy-6-(all-trans-polyprenyl)benzene-1,4-diol + S-adenosyl-L-methionine = a 5-methoxy-2-methyl-3-(all-trans-polyprenyl)benzene-1,4-diol + S-adenosyl-L-homocysteine + H(+). It participates in quinol/quinone metabolism; menaquinone biosynthesis; menaquinol from 1,4-dihydroxy-2-naphthoate: step 2/2. The protein operates within cofactor biosynthesis; ubiquinone biosynthesis. Methyltransferase required for the conversion of demethylmenaquinol (DMKH2) to menaquinol (MKH2) and the conversion of 2-polyprenyl-6-methoxy-1,4-benzoquinol (DDMQH2) to 2-polyprenyl-3-methyl-6-methoxy-1,4-benzoquinol (DMQH2). The chain is Ubiquinone/menaquinone biosynthesis C-methyltransferase UbiE from Haemophilus ducreyi (strain 35000HP / ATCC 700724).